A 215-amino-acid chain; its full sequence is ATP phosphoribosyltransferase (215 aa).

Belongs to the ATP phosphoribosyltransferase family. Short subfamily. Heteromultimer composed of HisG and HisZ subunits.

It is found in the cytoplasm. The catalysed reaction is 1-(5-phospho-beta-D-ribosyl)-ATP + diphosphate = 5-phospho-alpha-D-ribose 1-diphosphate + ATP. It participates in amino-acid biosynthesis; L-histidine biosynthesis; L-histidine from 5-phospho-alpha-D-ribose 1-diphosphate: step 1/9. Functionally, catalyzes the condensation of ATP and 5-phosphoribose 1-diphosphate to form N'-(5'-phosphoribosyl)-ATP (PR-ATP). Has a crucial role in the pathway because the rate of histidine biosynthesis seems to be controlled primarily by regulation of HisG enzymatic activity. The protein is ATP phosphoribosyltransferase of Lachnoclostridium phytofermentans (strain ATCC 700394 / DSM 18823 / ISDg) (Clostridium phytofermentans).